We begin with the raw amino-acid sequence, 177 residues long: Transcriptional repressor NrdR (177 aa).

A zinc finger spans residues 3 to 34; the sequence is CLFCQHTDTRVIDSRVSEDGATIRRRRECEAC. Positions 49–139 constitute an ATP-cone domain; the sequence is PVIIKKDGGR…VYRSFQDVAD (91 aa).

It belongs to the NrdR family. The cofactor is Zn(2+).

In terms of biological role, negatively regulates transcription of bacterial ribonucleotide reductase nrd genes and operons by binding to NrdR-boxes. The sequence is that of Transcriptional repressor NrdR from Xylella fastidiosa (strain M23).